The following is a 171-amino-acid chain: MNKANSFNKEELIACGHGKLFGPNSPRLPVDNMLMIDRIITINDNGGEFGKGEIVAELDIKPELWFFDCHFITDPVMPGCLGLDAMWQLVGFYLGWEGAEGKGRALGVGEVKFTGQVLPGAKKVTYKLNIKRTIHRKLVMGIADAILEVDGRQIYSATDLKVGVFSDTSTF.

Residue histidine 70 is part of the active site.

It belongs to the thioester dehydratase family. FabA subfamily. As to quaternary structure, homodimer.

It is found in the cytoplasm. It carries out the reaction a (3R)-hydroxyacyl-[ACP] = a (2E)-enoyl-[ACP] + H2O. The enzyme catalyses (3R)-hydroxydecanoyl-[ACP] = (2E)-decenoyl-[ACP] + H2O. The catalysed reaction is (2E)-decenoyl-[ACP] = (3Z)-decenoyl-[ACP]. Its pathway is lipid metabolism; fatty acid biosynthesis. In terms of biological role, necessary for the introduction of cis unsaturation into fatty acids. Catalyzes the dehydration of (3R)-3-hydroxydecanoyl-ACP to E-(2)-decenoyl-ACP and then its isomerization to Z-(3)-decenoyl-ACP. Can catalyze the dehydratase reaction for beta-hydroxyacyl-ACPs with saturated chain lengths up to 16:0, being most active on intermediate chain length. In Shewanella oneidensis (strain ATCC 700550 / JCM 31522 / CIP 106686 / LMG 19005 / NCIMB 14063 / MR-1), this protein is 3-hydroxydecanoyl-[acyl-carrier-protein] dehydratase.